The following is a 108-amino-acid chain: Translation initiation factor 1A (108 aa).

Positions 11–85 (SVKEVPKPAE…NKCDIIYKYS (75 aa)) constitute an S1-like domain.

This sequence belongs to the eIF-1A family.

Seems to be required for maximal rate of protein biosynthesis. Enhances ribosome dissociation into subunits and stabilizes the binding of the initiator Met-tRNA(I) to 40 S ribosomal subunits. The polypeptide is Translation initiation factor 1A (eIF1A) (Sulfurisphaera tokodaii (strain DSM 16993 / JCM 10545 / NBRC 100140 / 7) (Sulfolobus tokodaii)).